The following is a 98-amino-acid chain: NADH-ubiquinone oxidoreductase chain 4L (98 aa).

3 helical membrane-spanning segments follow: residues 1–21 (MTLT…GMLT), 27–47 (VASL…ATLI), and 61–81 (IILL…LISI).

The protein belongs to the complex I subunit 4L family. Core subunit of respiratory chain NADH dehydrogenase (Complex I) which is composed of 45 different subunits.

The protein localises to the mitochondrion inner membrane. The catalysed reaction is a ubiquinone + NADH + 5 H(+)(in) = a ubiquinol + NAD(+) + 4 H(+)(out). Functionally, core subunit of the mitochondrial membrane respiratory chain NADH dehydrogenase (Complex I) which catalyzes electron transfer from NADH through the respiratory chain, using ubiquinone as an electron acceptor. Part of the enzyme membrane arm which is embedded in the lipid bilayer and involved in proton translocation. In Macaca mulatta (Rhesus macaque), this protein is NADH-ubiquinone oxidoreductase chain 4L (MT-ND4L).